We begin with the raw amino-acid sequence, 332 residues long: Glycerol-3-phosphate dehydrogenase [NAD(P)+] (332 aa).

NADPH-binding residues include Ser11, Phe12, Lys32, and Lys106. Lys106, Gly137, and Ser139 together coordinate sn-glycerol 3-phosphate. NADPH is bound at residue Ala141. Sn-glycerol 3-phosphate is bound by residues Lys192, Asp245, Ser255, Arg256, and Asn257. Lys192 (proton acceptor) is an active-site residue. Residue Arg256 coordinates NADPH. NADPH is bound by residues Val280 and Glu282.

It belongs to the NAD-dependent glycerol-3-phosphate dehydrogenase family.

It localises to the cytoplasm. The enzyme catalyses sn-glycerol 3-phosphate + NAD(+) = dihydroxyacetone phosphate + NADH + H(+). The catalysed reaction is sn-glycerol 3-phosphate + NADP(+) = dihydroxyacetone phosphate + NADPH + H(+). The protein operates within membrane lipid metabolism; glycerophospholipid metabolism. Its function is as follows. Catalyzes the reduction of the glycolytic intermediate dihydroxyacetone phosphate (DHAP) to sn-glycerol 3-phosphate (G3P), the key precursor for phospholipid synthesis. The protein is Glycerol-3-phosphate dehydrogenase [NAD(P)+] of Staphylococcus saprophyticus subsp. saprophyticus (strain ATCC 15305 / DSM 20229 / NCIMB 8711 / NCTC 7292 / S-41).